The primary structure comprises 100 residues: Succinate dehydrogenase subunit 7B, mitochondrial (100 aa).

The disordered stretch occupies residues 1 to 25; the sequence is MAFLLNNASISSHLRSSSSQKTGDA. The N-terminal 32 residues, 1–32, are a transit peptide targeting the mitochondrion; that stretch reads MAFLLNNASISSHLRSSSSQKTGDALSISRRG. Residues 9-19 show a composition bias toward low complexity; it reads SISSHLRSSSS.

As to quaternary structure, component of complex II composed of eight subunits in plants: four classical SDH subunits SDH1, SDH2, SDH3 and SDH4 (a flavoprotein (FP), an iron-sulfur protein (IP), and a cytochrome b composed of a large and a small subunit.), as well as four subunits unknown in mitochondria from bacteria and heterotrophic eukaryotes.

It localises to the mitochondrion inner membrane. Its pathway is carbohydrate metabolism; tricarboxylic acid cycle. This chain is Succinate dehydrogenase subunit 7B, mitochondrial, found in Arabidopsis thaliana (Mouse-ear cress).